The sequence spans 610 residues: Probable methyltransferase PMT22 (610 aa).

Over 1–10 (MIKNIFQSRK) the chain is Cytoplasmic. Residues 11-31 (LSGLCVLSILLVSVTILLLTN) traverse the membrane as a helical; Signal-anchor for type II membrane protein segment. The Lumenal portion of the chain corresponds to 32–610 (DTIDLFPYLS…LVGLKSSWRP (579 aa)). Positions 56 to 69 (STPISSPTNDSSPP) are enriched in low complexity. The segment at 56–81 (STPISSPTNDSSPPLESPVNQTRVDD) is disordered. 6 N-linked (GlcNAc...) asparagine glycosylation sites follow: N64, N75, N100, N400, N469, and N546.

This sequence belongs to the methyltransferase superfamily.

The protein resides in the endoplasmic reticulum membrane. The sequence is that of Probable methyltransferase PMT22 from Arabidopsis thaliana (Mouse-ear cress).